An 805-amino-acid polypeptide reads, in one-letter code: ATP-dependent RNA helicase mak-5 (805 aa).

The segment covering 1 to 10 (MAVDKKRKNT) has biased composition (basic residues). Disordered stretches follow at residues 1–33 (MAVDKKRKNTKAPASGPKRRKTQPSSKQIKRPV) and 79–189 (VPKS…ELET). The span at 85-100 (EVEDDGEEFGGFDDEE) shows a compositional bias: acidic residues. 3 stretches are compositionally biased toward basic and acidic residues: residues 110 to 119 (QEVKTSETKA), 126 to 143 (AKEKKASKDQRKPKEQQK), and 164 to 189 (KNAEDKKKARKNEKTTVEPKDPELET). A Q motif motif is present at residues 209–237 (SEWVPLDLSPRMISSIAKLRFSKPTVIQS). Residues 240 to 463 (IPEIMAGHDV…AGKSKFKATS (224 aa)) enclose the Helicase ATP-binding domain. 253-260 (ASTGSGKT) is an ATP binding site. The DEAD box signature appears at 372–375 (DEAD). Basic and acidic residues predominate over residues 390-406 (FKALDRPPVEENNEDQK). Positions 390–435 (FKALDRPPVEENNEDQKMGGTDEEGQEEEEEDSEEEEEEEEEHVNK) are disordered. The span at 410–431 (TDEEGQEEEEEDSEEEEEEEEE) shows a compositional bias: acidic residues. A Helicase C-terminal domain is found at 510–666 (YLYATLMLQP…NSGNNTKKLV (157 aa)). The tract at residues 729–751 (AGKWGGKGSSKKQKQKEAQQMSK) is disordered.

It belongs to the DEAD box helicase family. DDX24/MAK5 subfamily.

Its subcellular location is the nucleus. The protein localises to the nucleolus. It catalyses the reaction ATP + H2O = ADP + phosphate + H(+). Functionally, ATP-binding RNA helicase involved in the biogenesis of 60S ribosomal subunits and is required for the normal formation of 25S and 5.8S rRNAs. This Neurospora crassa (strain ATCC 24698 / 74-OR23-1A / CBS 708.71 / DSM 1257 / FGSC 987) protein is ATP-dependent RNA helicase mak-5 (mak-5).